A 397-amino-acid polypeptide reads, in one-letter code: MAEFDRDLDDELEFKTSKDVDVTPTFESMDLKDDLLRGIYAYGFEAPSAIQSRAITQIIKGRDTIAQAQSGTGKTATFSISMLEVIDTKHRETQAMVLSPTRELATQIQSVILALGDYMNVQCHACIGGTSLSVDMKKLEAGQQVVSGTPGRCLDMIKKGCLRTKNLKMLILDEADELLNKGFQEQIYDIYRYLPAATQVVVVSATLPHSVLEMTSKFMTDPVRILVKRDELTLEGLKQYFIAVEQEEWKFDTLCDLYDTLTITQAVIFCNTKKKVDWLTQQMKDNNFTVCSMHGDMAQKDRDSIMNEFRSGRSRVLISTDVWARGIDVQQVSLVINYDLPPNRENYIHRIGRSGRFGRKGVAINFATNDDITTLRDIEQYYSTQIDEMPVNVTDMM.

The short motif at 24 to 52 (PTFESMDLKDDLLRGIYAYGFEAPSAIQS) is the Q motif element. In terms of domain architecture, Helicase ATP-binding spans 55-225 (ITQIIKGRDT…SKFMTDPVRI (171 aa)). 68 to 75 (AQSGTGKT) serves as a coordination point for ATP. The DEAD box motif lies at 173–176 (DEAD). In terms of domain architecture, Helicase C-terminal spans 236–397 (GLKQYFIAVE…EMPVNVTDMM (162 aa)).

The protein belongs to the DEAD box helicase family. DDX48/FAL1 subfamily.

It localises to the nucleus. It is found in the nucleolus. The enzyme catalyses ATP + H2O = ADP + phosphate + H(+). Functionally, ATP-dependent RNA helicase involved in 40S ribosomal subunit biogenesis. Required for the processing and cleavage of 35S pre-rRNA at sites A0, A1, and A2, leading to mature 18S rRNA. The chain is ATP-dependent RNA helicase FAL1 (FAL1) from Yarrowia lipolytica (strain CLIB 122 / E 150) (Yeast).